Consider the following 345-residue polypeptide: Transcription initiation factor IIB (345 aa).

Residues Val-8 to Ala-40 form a TFIIB-type zinc finger. Zn(2+)-binding residues include Cys-12, Cys-15, Cys-32, and Cys-35. 2 disordered regions span residues Asp-59–Ser-89 and Pro-318–Thr-345. Low complexity predominate over residues Thr-71–Ala-83.

Belongs to the TFIIB family. As to quaternary structure, monomer. Interacts with RNA polymerase II subunits RPB1 and RPB2. Interacts with TBP; the interaction is direct.

The protein resides in the nucleus. In terms of biological role, specifically binds to the promoter of the spliced leader (SL) RNA gene and thus is essential for SLRNA transcription. The protein is Transcription initiation factor IIB of Trypanosoma brucei brucei.